A 932-amino-acid chain; its full sequence is 2-oxoglutarate dehydrogenase E1 component (932 aa).

This sequence belongs to the alpha-ketoglutarate dehydrogenase family. As to quaternary structure, homodimer. Part of the 2-oxoglutarate dehydrogenase (OGDH) complex composed of E1 (2-oxoglutarate dehydrogenase), E2 (dihydrolipoamide succinyltransferase) and E3 (dihydrolipoamide dehydrogenase); the complex contains multiple copies of the three enzymatic components (E1, E2 and E3). The cofactor is thiamine diphosphate.

It carries out the reaction N(6)-[(R)-lipoyl]-L-lysyl-[protein] + 2-oxoglutarate + H(+) = N(6)-[(R)-S(8)-succinyldihydrolipoyl]-L-lysyl-[protein] + CO2. In terms of biological role, E1 component of the 2-oxoglutarate dehydrogenase (OGDH) complex which catalyzes the decarboxylation of 2-oxoglutarate, the first step in the conversion of 2-oxoglutarate to succinyl-CoA and CO(2). The polypeptide is 2-oxoglutarate dehydrogenase E1 component (Staphylococcus aureus (strain USA300)).